A 33-amino-acid polypeptide reads, in one-letter code: Thrombin-like enzyme RP34 (33 aa).

Residues 1-33 (VIGGDEXDINEHRSLALMYXSWSHRFIXXGXLI) enclose the Peptidase S1 domain.

It belongs to the peptidase S1 family. Snake venom subfamily. In terms of assembly, homodimer. Expressed by the venom gland.

It localises to the secreted. It carries out the reaction Selective cleavage of Arg-|-Xaa bond in fibrinogen, to form fibrin, and release fibrinopeptide A. The specificity of further degradation of fibrinogen varies with species origin of the enzyme.. In terms of biological role, thrombin-like snake venom serine protease that displays clotting activity on fibrinogen. Shows both arginine-ester hydrolase and amidase activities on synthetic substrates. Also shows proteolytic activity toward casein. This Cerastes cerastes (Horned desert viper) protein is Thrombin-like enzyme RP34.